A 155-amino-acid chain; its full sequence is UPF0260 protein Smed_0627 (155 aa).

Belongs to the UPF0260 family.

This chain is UPF0260 protein Smed_0627, found in Sinorhizobium medicae (strain WSM419) (Ensifer medicae).